A 226-amino-acid polypeptide reads, in one-letter code: ATP synthase F(0) complex subunit a (226 aa).

6 helical membrane passes run Pro-12–Pro-32, Trp-68–Leu-88, Gln-97–Phe-117, Ile-138–Val-158, Ile-164–Ile-184, and Thr-200–Leu-222.

It belongs to the ATPase A chain family. In terms of assembly, component of the ATP synthase complex composed at least of ATP5F1A/subunit alpha, ATP5F1B/subunit beta, ATP5MC1/subunit c (homooctomer), MT-ATP6/subunit a, MT-ATP8/subunit 8, ATP5ME/subunit e, ATP5MF/subunit f, ATP5MG/subunit g, ATP5MK/subunit k, ATP5MJ/subunit j, ATP5F1C/subunit gamma, ATP5F1D/subunit delta, ATP5F1E/subunit epsilon, ATP5PF/subunit F6, ATP5PB/subunit b, ATP5PD/subunit d, ATP5PO/subunit OSCP. ATP synthase complex consists of a soluble F(1) head domain (subunits alpha(3) and beta(3)) - the catalytic core - and a membrane F(0) domain - the membrane proton channel (subunits c, a, 8, e, f, g, k and j). These two domains are linked by a central stalk (subunits gamma, delta, and epsilon) rotating inside the F1 region and a stationary peripheral stalk (subunits F6, b, d, and OSCP). Interacts with DNAJC30; interaction is direct.

It localises to the mitochondrion inner membrane. It carries out the reaction H(+)(in) = H(+)(out). Subunit a, of the mitochondrial membrane ATP synthase complex (F(1)F(0) ATP synthase or Complex V) that produces ATP from ADP in the presence of a proton gradient across the membrane which is generated by electron transport complexes of the respiratory chain. ATP synthase complex consist of a soluble F(1) head domain - the catalytic core - and a membrane F(1) domain - the membrane proton channel. These two domains are linked by a central stalk rotating inside the F(1) region and a stationary peripheral stalk. During catalysis, ATP synthesis in the catalytic domain of F(1) is coupled via a rotary mechanism of the central stalk subunits to proton translocation. With the subunit c (ATP5MC1), forms the proton-conducting channel in the F(0) domain, that contains two crucial half-channels (inlet and outlet) that facilitate proton movement from the mitochondrial intermembrane space (IMS) into the matrix. Protons are taken up via the inlet half-channel and released through the outlet half-channel, following a Grotthuss mechanism. In Felis catus (Cat), this protein is ATP synthase F(0) complex subunit a.